Here is a 228-residue protein sequence, read N- to C-terminus: FAS1 domain-containing protein NCU02579 (228 aa).

An N-terminal signal peptide occupies residues 1–18; it reads MRFTPYLVLAPTAAVAFA. Residues 50 to 74 are disordered; the sequence is PAVGLGPAMPPSGAPQADGPANAGG. One can recognise an FAS1 domain in the interval 77–225; that stretch reads SVMLSDVMGR…GEVWILKGVR (149 aa).

Its subcellular location is the vacuole. This Neurospora crassa (strain ATCC 24698 / 74-OR23-1A / CBS 708.71 / DSM 1257 / FGSC 987) protein is FAS1 domain-containing protein NCU02579.